A 792-amino-acid polypeptide reads, in one-letter code: RAD50-interacting protein 1 (792 aa).

The disordered stretch occupies residues 1–22 (MLPAGEIGASPAAPCCSESGDE). A coiled-coil region spans residues 103–124 (IRSALKNAEESKQFLNQFLEQE). The 573-residue stretch at 220 to 792 (WHKILKDKLT…LRTNWPNTGK (573 aa)) folds into the RINT1/TIP20 domain.

The protein belongs to the RINT1 family. Component of the NRZ complex composed of NBAS, ZW10 and RINT1/TIP20L; NRZ associates with SNAREs STX18, USE1L, BNIP1/SEC20L and SEC22B (the assembly has been described as syntaxin 18 complex). Interacts directly with BNIP1/SEC20L and ZW10. Interacts with UVRAG. Interacts with RAD50 during late S and G2/M phases. Interacts with RBL2, preferentially with the active, hypophosphorylated form.

The protein resides in the cytoplasm. The protein localises to the endoplasmic reticulum membrane. Involved in regulation of membrane traffic between the Golgi and the endoplasmic reticulum (ER); the function is proposed to depend on its association in the NRZ complex which is believed to play a role in SNARE assembly at the ER. May play a role in cell cycle checkpoint control. Essential for telomere length control. This chain is RAD50-interacting protein 1 (RINT1), found in Homo sapiens (Human).